The chain runs to 240 residues: HTH-type transcriptional repressor STM4068 (240 aa).

Residues 9 to 77 (TPLYKQLFFI…RGSGSVVCSV (69 aa)) enclose the HTH gntR-type domain. The segment at residues 37–56 (QKEIARSYNVSLIVVKQAWS) is a DNA-binding region (H-T-H motif).

In terms of biological role, represses the expression of the STM4065-STM4067 operon. This Salmonella typhimurium (strain LT2 / SGSC1412 / ATCC 700720) protein is HTH-type transcriptional repressor STM4068.